We begin with the raw amino-acid sequence, 277 residues long: S-formylglutathione hydrolase FrmB (277 aa).

Active-site charge relay system residues include S145, D221, and H254.

The protein belongs to the esterase D family.

The enzyme catalyses S-formylglutathione + H2O = formate + glutathione + H(+). In terms of biological role, serine hydrolase involved in the detoxification of formaldehyde. Hydrolyzes S-formylglutathione to glutathione and formate. The polypeptide is S-formylglutathione hydrolase FrmB (frmB) (Escherichia coli O157:H7).